A 530-amino-acid polypeptide reads, in one-letter code: MENSRPIKRALLSVSDKAGIIEFAKELSARGVEILSTGGTCKLLAENDIKVTEVSDYTGFPEMMDGRVKTLHPKIHGGILARRGIDEVIMSENDIAPIDLVVVNLYPFAETVARPDCSLEDAIENIDIGGPTMVRAAAKNHKDVGIVVNAGDYPRVLKEMQENNNSLAYKTRFDLAIAAYEHTAQYDGMIANYFGTMVPSYGENSEGDLESKFPRTINMQFKKKQDMRYGENSHQSAAFYVEDDIQEASVSTATQLQGKALSYNNIADTDAALECVKEFSEPACVIVKHSNPCGVAVAGNILDAYEGAYKTDPTSAFGGIIAFNRELDAKTAEAIVSRQFVEVIIAPSVSPEAAKIVATKKNLRLLACGEWSDKTTQFDIKRVNGGLLVQDRDQGMVGLEDLKVVTKRQPTEAELKDLLFSWKVAKFVKSNAIVYVKNNATVGVGAGQMSRVYSAKVAGIKAADENLVVAGSVMSSDAFFPFRDGIDAAAEAGISCVIQPGGSMRDNEVIAAADEHGMAMVFTGMRHFRH.

The MGS-like domain occupies 1–148; that stretch reads MENSRPIKRA…KNHKDVGIVV (148 aa).

Belongs to the PurH family.

The catalysed reaction is (6R)-10-formyltetrahydrofolate + 5-amino-1-(5-phospho-beta-D-ribosyl)imidazole-4-carboxamide = 5-formamido-1-(5-phospho-D-ribosyl)imidazole-4-carboxamide + (6S)-5,6,7,8-tetrahydrofolate. It catalyses the reaction IMP + H2O = 5-formamido-1-(5-phospho-D-ribosyl)imidazole-4-carboxamide. It functions in the pathway purine metabolism; IMP biosynthesis via de novo pathway; 5-formamido-1-(5-phospho-D-ribosyl)imidazole-4-carboxamide from 5-amino-1-(5-phospho-D-ribosyl)imidazole-4-carboxamide (10-formyl THF route): step 1/1. Its pathway is purine metabolism; IMP biosynthesis via de novo pathway; IMP from 5-formamido-1-(5-phospho-D-ribosyl)imidazole-4-carboxamide: step 1/1. The polypeptide is Bifunctional purine biosynthesis protein PurH (Psychromonas ingrahamii (strain DSM 17664 / CCUG 51855 / 37)).